Consider the following 591-residue polypeptide: L-lactate dehydrogenase (cytochrome) (591 aa).

Residues 1 to 80 (MLKYKPLLKI…LNWHNGQIDN (80 aa)) constitute a mitochondrion transit peptide. The Cytochrome b5 heme-binding domain maps to 88-165 (KQKISPAEVA…APEKKLGPLQ (78 aa)). Heme b is bound by residues H123, H146, Y177, Q219, and Y223. The region spanning 197–563 (PPLDNIINLY…KPDLLDLSTL (367 aa)) is the FMN hydroxy acid dehydrogenase domain. A pyruvate-binding site is contributed by Y223. Residues 275–278 (SATA), S308, and Q332 contribute to the FMN site. Y334 serves as a coordination point for pyruvate. T360 provides a ligand contact to FMN. K376 contributes to the heme b binding site. K429 contacts FMN. 2 residues coordinate pyruvate: H453 and R456. H453 acts as the Proton acceptor in catalysis. FMN is bound by residues 489 to 493 (DGGVR) and 512 to 513 (GR).

It in the N-terminal section; belongs to the cytochrome b5 family. This sequence in the C-terminal section; belongs to the FMN-dependent alpha-hydroxy acid dehydrogenase family. Homotetramer. It depends on FMN as a cofactor. Heme b is required as a cofactor.

Its subcellular location is the mitochondrion intermembrane space. It carries out the reaction (S)-lactate + 2 Fe(III)-[cytochrome c] = 2 Fe(II)-[cytochrome c] + pyruvate + 2 H(+). Its function is as follows. Catalyzes the oxidation of (S)-lactate (L-lactate) to pyruvate with subsequent transfer of electrons to cytochrome c. Is involved in the utilization of (S)-lactate as a sole source of carbon for growth. Can also use ferricyanide as an electron acceptor in vitro. This chain is L-lactate dehydrogenase (cytochrome) (CYB2), found in Saccharomyces cerevisiae (strain ATCC 204508 / S288c) (Baker's yeast).